We begin with the raw amino-acid sequence, 357 residues long: Poly(3-hydroxyalkanoate) polymerase subunit PhaE (357 aa).

The interval 320–357 is disordered; that stretch reads AALAGEEPATKPATALRSPAPAAKAPARRRTTKTNPAD. Positions 331–344 are enriched in low complexity; the sequence is PATALRSPAPAAKA.

It belongs to the PHA/PHB synthase family. Type III PhaE subfamily. A large complex of PhaC and PhaE; the ratio of the subunits has been estimated to be from 1:1 to 4:1, with more PhaE than PhaC.

It localises to the cytoplasm. It participates in biopolymer metabolism; poly-(R)-3-hydroxybutanoate biosynthesis. Its function is as follows. Polymerizes D(-)-3-hydroxybutyryl-CoA to create polyhydroxybutyrate (PHB) which consists of thousands of hydroxybutyrate molecules linked end to end. This subunit has no catalytic activity but enhances the activity of PhaC, the catalytic subunit, 100-fold. The protein is Poly(3-hydroxyalkanoate) polymerase subunit PhaE of Allochromatium vinosum (strain ATCC 17899 / DSM 180 / NBRC 103801 / NCIMB 10441 / D) (Chromatium vinosum).